A 419-amino-acid polypeptide reads, in one-letter code: Acyl-coenzyme A thioesterase 1 (419 aa).

Residues serine 232, aspartate 324, and histidine 358 each act as charge relay system in the active site. Serine 416 is subject to Phosphoserine.

The protein belongs to the C/M/P thioester hydrolase family. Monomer. As to expression, expressed in heart, kidney, brown adipose tissue, white adipose tissue, adrenal gland and muscle.

It is found in the cytoplasm. The protein resides in the cytosol. The catalysed reaction is hexadecanoyl-CoA + H2O = hexadecanoate + CoA + H(+). The enzyme catalyses decanoyl-CoA + H2O = decanoate + CoA + H(+). It catalyses the reaction dodecanoyl-CoA + H2O = dodecanoate + CoA + H(+). It carries out the reaction tetradecanoyl-CoA + H2O = tetradecanoate + CoA + H(+). The catalysed reaction is octadecanoyl-CoA + H2O = octadecanoate + CoA + H(+). The enzyme catalyses eicosanoyl-CoA + H2O = eicosanoate + CoA + H(+). It catalyses the reaction (9Z)-octadecenoyl-CoA + H2O = (9Z)-octadecenoate + CoA + H(+). It carries out the reaction (9Z)-hexadecenoyl-CoA + H2O = (9Z)-hexadecenoate + CoA + H(+). The catalysed reaction is (9E)-octadecenoyl-CoA + H2O = (9E)-octadecenoate + CoA + H(+). It participates in lipid metabolism; fatty acid metabolism. Catalyzes the hydrolysis of acyl-CoAs into free fatty acids and coenzyme A (CoASH), regulating their respective intracellular levels. More active towards saturated and unsaturated long chain fatty acyl-CoAs (C12-C20). The sequence is that of Acyl-coenzyme A thioesterase 1 (Acot1) from Mus musculus (Mouse).